The following is a 660-amino-acid chain: Arginine--tRNA ligase, cytoplasmic (660 aa).

M1 carries the post-translational modification N-acetylmethionine. The tract at residues 1–72 (MDALVAHCSA…QAERNKPTKT (72 aa)) is could be involved in the assembly of the multisynthetase complex. Residues 200–202 (SPN), H211, Y384, D388, and Q412 each bind L-arginine. The 'HIGH' region motif lies at 201–212 (PNIAKEMHVGHL). Residues 529–543 (NTAAYLLYAFTRIRS) are interaction with tRNA.

It belongs to the class-I aminoacyl-tRNA synthetase family. Interacts (via N-terminus) with AIMP1 (via N-terminus); this stimulates its catalytic activity. Interacts (via N-terminus) with LARS2 (via C-terminus). Monomer. Part of a multisubunit complex that groups tRNA ligases for Arg (RARS1), Asp (DARS1), Gln (QARS1), Ile (IARS1), Leu (LARS1), Lys (KARS1), Met (MARS1) the bifunctional ligase for Glu and Pro (EPRS1) and the auxiliary subunits AIMP1/p43, AIMP2/p38 and EEF1E1/p18. Interacts with QARS1. Part of a complex composed of RARS1, QARS1 and AIMP1.

It localises to the cytoplasm. The protein localises to the cytosol. The catalysed reaction is tRNA(Arg) + L-arginine + ATP = L-arginyl-tRNA(Arg) + AMP + diphosphate. Forms part of a macromolecular complex that catalyzes the attachment of specific amino acids to cognate tRNAs during protein synthesis. Modulates the secretion of AIMP1 and may be involved in generation of the inflammatory cytokine EMAP2 from AIMP1. The chain is Arginine--tRNA ligase, cytoplasmic (RARS1) from Bos taurus (Bovine).